Consider the following 186-residue polypeptide: Peptidyl-tRNA hydrolase (186 aa).

TRNA is bound at residue Y14. The active-site Proton acceptor is H19. TRNA contacts are provided by Y61, N63, and N107.

The protein belongs to the PTH family. Monomer.

It localises to the cytoplasm. It carries out the reaction an N-acyl-L-alpha-aminoacyl-tRNA + H2O = an N-acyl-L-amino acid + a tRNA + H(+). Functionally, hydrolyzes ribosome-free peptidyl-tRNAs (with 1 or more amino acids incorporated), which drop off the ribosome during protein synthesis, or as a result of ribosome stalling. In terms of biological role, catalyzes the release of premature peptidyl moieties from peptidyl-tRNA molecules trapped in stalled 50S ribosomal subunits, and thus maintains levels of free tRNAs and 50S ribosomes. This chain is Peptidyl-tRNA hydrolase, found in Helicobacter pylori (strain G27).